A 333-amino-acid chain; its full sequence is GDP-mannose transporter GONST1 (333 aa).

9 helical membrane-spanning segments follow: residues 33 to 55 (ALLS…KFVL), 62 to 84 (AGIF…LSLM), 99 to 121 (VWFP…LKYI), 153 to 170 (VWAA…GGIT), 174 to 196 (FNAV…SLTL), 216 to 238 (SMVL…FFNE), 253 to 275 (FWMV…MWFL), 282 to 304 (TYSL…LFNV), and 308 to 325 (LQNS…VVFA).

Belongs to the nucleotide-sugar transporter family. GDP-Mannose:GMP antiporter (GMA) (TC 2.A.7.13) subfamily.

Its subcellular location is the golgi apparatus membrane. Functionally, involved in the import of GDP-mannose from the cytoplasm into the Golgi lumen. Required for the luminal synthesis of a variety of plant cell surface components. Is required for the correct mannosylation of the glycosylinositol phosphoceramides (GIPC). Can indifferently transport GDP-mannose, GDP-Glucose, GDP-Fucose or GDP-Galactose in vitro. This Arabidopsis thaliana (Mouse-ear cress) protein is GDP-mannose transporter GONST1.